Consider the following 241-residue polypeptide: Protein TraL (241 aa).

The protein to plasmid R751 TraL.

This Escherichia coli protein is Protein TraL (traL).